A 500-amino-acid polypeptide reads, in one-letter code: Na(+)/H(+) antiporter NhaB (500 aa).

13 consecutive transmembrane segments (helical) span residues His-11–Leu-31, Leu-34–Phe-54, Met-58–Leu-78, Val-96–Phe-116, Ala-129–Leu-149, Thr-150–Ala-170, Leu-205–Pro-225, Phe-241–Val-261, Ile-311–Ile-331, Phe-350–Ile-370, Met-394–Ile-414, Ala-450–Ile-470, and Met-477–Thr-497.

The protein belongs to the NhaB Na(+)/H(+) (TC 2.A.34) antiporter family.

The protein localises to the cell inner membrane. The catalysed reaction is 2 Na(+)(in) + 3 H(+)(out) = 2 Na(+)(out) + 3 H(+)(in). Na(+)/H(+) antiporter that extrudes sodium in exchange for external protons. The protein is Na(+)/H(+) antiporter NhaB of Pseudomonas putida (strain GB-1).